The chain runs to 326 residues: Protein phosphatase PTC7 homolog fig (326 aa).

The segment at 40–83 (VQGKSKPRSPHLTSPQCSPEHRPRRFRPPSASGRTAFSSAPRPK) is disordered. A PPM-type phosphatase domain is found at 64-314 (RFRPPSASGR…DDITVVLASV (251 aa)). Residues D91, G92, and D236 each contribute to the Mn(2+) site.

This sequence belongs to the PP2C family. Mg(2+) is required as a cofactor. Requires Mn(2+) as cofactor.

The enzyme catalyses O-phospho-L-seryl-[protein] + H2O = L-seryl-[protein] + phosphate. It carries out the reaction O-phospho-L-threonyl-[protein] + H2O = L-threonyl-[protein] + phosphate. This is Protein phosphatase PTC7 homolog fig from Drosophila persimilis (Fruit fly).